The following is a 143-amino-acid chain: MAKKIVGFIKLQVPAGKANPSPPIGPALGQRGLNIMEFCKAFNAQTQGVEPGLPLPVVITAFADKSFTFIIKTPPATTLIKKAIKLEKGSSNALSTKVGKITRAQLEEIAKTKLKDMNAANVDAAVRTLAGSARSMGVTVEGL.

It belongs to the universal ribosomal protein uL11 family. As to quaternary structure, part of the ribosomal stalk of the 50S ribosomal subunit. Interacts with L10 and the large rRNA to form the base of the stalk. L10 forms an elongated spine to which L12 dimers bind in a sequential fashion forming a multimeric L10(L12)X complex. Post-translationally, one or more lysine residues are methylated.

Functionally, forms part of the ribosomal stalk which helps the ribosome interact with GTP-bound translation factors. The protein is Large ribosomal subunit protein uL11 of Paracidovorax citrulli (strain AAC00-1) (Acidovorax citrulli).